The primary structure comprises 80 residues: Myocilin opposite strand protein (80 aa).

The interval glutamate 53–serine 80 is disordered.

The chain is Myocilin opposite strand protein from Homo sapiens (Human).